Here is a 475-residue protein sequence, read N- to C-terminus: uncharacterized protein (475 aa).

The disordered stretch occupies residues 42 to 292 (NLQNSLTGKT…NTRKGQRHNN (251 aa)). Basic and acidic residues-rich tracts occupy residues 59–72 (EANH…KSED) and 119–134 (IAEK…DDSQ). Composition is skewed to polar residues over residues 150-159 (ITPNFTHTPI) and 220-242 (NNTF…TSED). Residues 243–263 (SSSQAPHHSSSSGHAPSQQGG) are compositionally biased toward low complexity. Residues 277 to 289 (FHHKGRNTRKGQR) show a composition bias toward basic residues. The HTH La-type RNA-binding domain maps to 319–408 (NPYLCDVQAF…MSIKVRRKET (90 aa)). A Phosphothreonine modification is found at Thr-408. Ser-410 carries the post-translational modification Phosphoserine.

The protein localises to the cytoplasm. This is an uncharacterized protein from Schizosaccharomyces pombe (strain 972 / ATCC 24843) (Fission yeast).